Reading from the N-terminus, the 390-residue chain is Alcohol dehydrogenase-like 7 (390 aa).

The Zn(2+) site is built by C56, S58, H78, C108, C111, C114, C122, and C187. 2 residues coordinate an alcohol: S58 and H78. S58 is an NAD(+) binding site. NAD(+) contacts are provided by residues 212 to 217 (GLGSIG), D236, K241, 306 to 308 (LGV), F334, and R384.

Belongs to the zinc-containing alcohol dehydrogenase family. Class-III subfamily. Homodimer. Requires Zn(2+) as cofactor.

It is found in the cytoplasm. It carries out the reaction a primary alcohol + NAD(+) = an aldehyde + NADH + H(+). The catalysed reaction is a secondary alcohol + NAD(+) = a ketone + NADH + H(+). This is Alcohol dehydrogenase-like 7 from Arabidopsis thaliana (Mouse-ear cress).